A 317-amino-acid chain; its full sequence is Beta-ketoacyl-[acyl-carrier-protein] synthase III (317 aa).

Active-site residues include Cys-112 and His-244. Residues 245 to 249 (QANIR) are ACP-binding. Asn-274 is a catalytic residue.

This sequence belongs to the thiolase-like superfamily. FabH family. As to quaternary structure, homodimer.

It localises to the cytoplasm. It carries out the reaction malonyl-[ACP] + acetyl-CoA + H(+) = 3-oxobutanoyl-[ACP] + CO2 + CoA. The protein operates within lipid metabolism; fatty acid biosynthesis. Functionally, catalyzes the condensation reaction of fatty acid synthesis by the addition to an acyl acceptor of two carbons from malonyl-ACP. Catalyzes the first condensation reaction which initiates fatty acid synthesis and may therefore play a role in governing the total rate of fatty acid production. Possesses both acetoacetyl-ACP synthase and acetyl transacylase activities. Its substrate specificity determines the biosynthesis of branched-chain and/or straight-chain of fatty acids. The sequence is that of Beta-ketoacyl-[acyl-carrier-protein] synthase III from Rickettsia typhi (strain ATCC VR-144 / Wilmington).